The primary structure comprises 700 residues: Polyribonucleotide nucleotidyltransferase (700 aa).

Positions 484 and 490 each coordinate Mg(2+). A KH domain is found at 551–610 (PRVIRMVVDPEKIREIIGPGGKTISKIIAETGVKIDIEEDGRLYITASDLRSGERAKQMI). The region spanning 620–688 (GEIYLGKVLR…KLGRISLSRK (69 aa)) is the S1 motif domain.

The protein belongs to the polyribonucleotide nucleotidyltransferase family. It depends on Mg(2+) as a cofactor.

The protein resides in the cytoplasm. The enzyme catalyses RNA(n+1) + phosphate = RNA(n) + a ribonucleoside 5'-diphosphate. In terms of biological role, involved in mRNA degradation. Catalyzes the phosphorolysis of single-stranded polyribonucleotides processively in the 3'- to 5'-direction. The sequence is that of Polyribonucleotide nucleotidyltransferase from Thermoanaerobacter sp. (strain X514).